Here is a 333-residue protein sequence, read N- to C-terminus: Adenosine deaminase (333 aa).

Zn(2+) is bound by residues His12 and His14. Substrate-binding residues include His14, Asp16, and Gly170. Zn(2+) is bound at residue His197. The Proton donor role is filled by Glu200. Asp278 is a Zn(2+) binding site. Residue Asp279 participates in substrate binding.

The protein belongs to the metallo-dependent hydrolases superfamily. Adenosine and AMP deaminases family. Adenosine deaminase subfamily. Requires Zn(2+) as cofactor.

It catalyses the reaction adenosine + H2O + H(+) = inosine + NH4(+). The catalysed reaction is 2'-deoxyadenosine + H2O + H(+) = 2'-deoxyinosine + NH4(+). Catalyzes the hydrolytic deamination of adenosine and 2-deoxyadenosine. This Escherichia coli (strain SE11) protein is Adenosine deaminase.